The sequence spans 518 residues: Putative malate dehydrogenase 1B (518 aa).

Belongs to the LDH/MDH superfamily. MDH type 2 family.

The chain is Putative malate dehydrogenase 1B (MDH1B) from Homo sapiens (Human).